The sequence spans 301 residues: DSC E3 ubiquitin ligase complex subunit B (301 aa).

3 helical membrane passes run 9–29, 52–72, and 90–110; these read APIT…LSIL, LATW…AAML, and TFII…LVLL. Residues 268-284 are compositionally biased toward low complexity; it reads AAAAASGNAGSASEASG. Residues 268–301 are disordered; the sequence is AAAAASGNAGSASEASGQRQRRREGGIMDRLRAL. Residues 290–301 are compositionally biased toward basic and acidic residues; it reads REGGIMDRLRAL.

Component of the DSC E3 ubiquitin ligase complex composed of dscA, dscB, dscC and dscD.

The protein localises to the endoplasmic reticulum membrane. The enzyme catalyses S-ubiquitinyl-[E2 ubiquitin-conjugating enzyme]-L-cysteine + [acceptor protein]-L-lysine = [E2 ubiquitin-conjugating enzyme]-L-cysteine + N(6)-ubiquitinyl-[acceptor protein]-L-lysine.. The protein operates within protein modification; protein ubiquitination. Component of the DSC E3 ubiquitin ligase complex which is required for the srbA transcriptional activator proteolytic cleavage to release the soluble transcription factor from the membrane in low oxygen or sterol conditions. Required for growth during hypoxia and triazole drug susceptibility, as well as for virulence in a murine model of invasive pulmonary aspergillosis (IPA). The chain is DSC E3 ubiquitin ligase complex subunit B from Aspergillus fumigatus (strain ATCC MYA-4609 / CBS 101355 / FGSC A1100 / Af293) (Neosartorya fumigata).